The chain runs to 599 residues: Aspartate--tRNA(Asp/Asn) ligase (599 aa).

L-aspartate is bound at residue E174. The segment at 198–201 (QLFK) is aspartate. Position 220 (R220) interacts with L-aspartate. ATP-binding positions include 220-222 (RDE) and Q229. L-aspartate is bound at residue H457. E491 lines the ATP pocket. An L-aspartate-binding site is contributed by R498. An ATP-binding site is contributed by 543–546 (GLDR).

It belongs to the class-II aminoacyl-tRNA synthetase family. Type 1 subfamily. Homodimer.

Its subcellular location is the cytoplasm. It catalyses the reaction tRNA(Asx) + L-aspartate + ATP = L-aspartyl-tRNA(Asx) + AMP + diphosphate. In terms of biological role, aspartyl-tRNA synthetase with relaxed tRNA specificity since it is able to aspartylate not only its cognate tRNA(Asp) but also tRNA(Asn). Reaction proceeds in two steps: L-aspartate is first activated by ATP to form Asp-AMP and then transferred to the acceptor end of tRNA(Asp/Asn). The protein is Aspartate--tRNA(Asp/Asn) ligase of Paraburkholderia phymatum (strain DSM 17167 / CIP 108236 / LMG 21445 / STM815) (Burkholderia phymatum).